Consider the following 223-residue polypeptide: Octanoyltransferase (223 aa).

The 176-residue stretch at 32–207 (DETPDEIWLV…HFAHHLAITD (176 aa)) folds into the BPL/LPL catalytic domain. Substrate-binding positions include 71–78 (RGGQVTYH), 138–140 (SLG), and 151–153 (GLA). C169 serves as the catalytic Acyl-thioester intermediate.

The protein belongs to the LipB family.

It is found in the cytoplasm. It catalyses the reaction octanoyl-[ACP] + L-lysyl-[protein] = N(6)-octanoyl-L-lysyl-[protein] + holo-[ACP] + H(+). The protein operates within protein modification; protein lipoylation via endogenous pathway; protein N(6)-(lipoyl)lysine from octanoyl-[acyl-carrier-protein]: step 1/2. Catalyzes the transfer of endogenously produced octanoic acid from octanoyl-acyl-carrier-protein onto the lipoyl domains of lipoate-dependent enzymes. Lipoyl-ACP can also act as a substrate although octanoyl-ACP is likely to be the physiological substrate. This is Octanoyltransferase from Erwinia tasmaniensis (strain DSM 17950 / CFBP 7177 / CIP 109463 / NCPPB 4357 / Et1/99).